A 926-amino-acid polypeptide reads, in one-letter code: Probable Xaa-Pro aminopeptidase PTT_10145 (926 aa).

Mn(2+) contacts are provided by D274, D285, E435, and E476. 5 disordered regions span residues 505–538, 595–615, 668–696, 711–741, and 865–926; these read GNPG…PGIS, KRDS…LSPV, SSST…EEKH, IGQS…KAAT, and MPVL…FLTR. Residues 506-515 are compositionally biased toward polar residues; sequence NPGTTEILNP. Composition is skewed to basic and acidic residues over residues 685–696 and 719–730; these read SRQKSHTVEEKH and GPEERRRKAQSD. The span at 887 to 897 shows a compositional bias: polar residues; sequence NNATNKRSMID. The span at 900–915 shows a compositional bias: basic and acidic residues; that stretch reads PAERRTRPERPERPAR.

It belongs to the peptidase M24B family. Mn(2+) is required as a cofactor.

The catalysed reaction is Release of any N-terminal amino acid, including proline, that is linked to proline, even from a dipeptide or tripeptide.. Its function is as follows. Catalyzes the removal of a penultimate prolyl residue from the N-termini of peptides. The protein is Probable Xaa-Pro aminopeptidase PTT_10145 of Pyrenophora teres f. teres (strain 0-1) (Barley net blotch fungus).